The following is a 155-amino-acid chain: MRIGQGVDVHAFGDGDKIVIGGVVIPYERGLVAHSDGDVLLHALCDALLGAAALGDIGKHFPDTDSAYKNACSRTLLRMVYSKLKAKGYSLVNADMTIVAQAPKMAPHISDMRAKIAEDLDTHIDNINVKATTTEQLGFNGRKEGITALATVLIK.

2 residues coordinate a divalent metal cation: D8 and H10. 4-CDP-2-C-methyl-D-erythritol 2-phosphate contacts are provided by residues 8 to 10 and 34 to 35; these read DVH and HS. H42 contributes to the a divalent metal cation binding site. Residues 56–58, 61–65, 100–106, 132–135, F139, and R142 each bind 4-CDP-2-C-methyl-D-erythritol 2-phosphate; these read DIG, FPDTD, AQAPKMA, and TTTE.

This sequence belongs to the IspF family. In terms of assembly, homotrimer. It depends on a divalent metal cation as a cofactor.

The catalysed reaction is 4-CDP-2-C-methyl-D-erythritol 2-phosphate = 2-C-methyl-D-erythritol 2,4-cyclic diphosphate + CMP. It participates in isoprenoid biosynthesis; isopentenyl diphosphate biosynthesis via DXP pathway; isopentenyl diphosphate from 1-deoxy-D-xylulose 5-phosphate: step 4/6. Involved in the biosynthesis of isopentenyl diphosphate (IPP) and dimethylallyl diphosphate (DMAPP), two major building blocks of isoprenoid compounds. Catalyzes the conversion of 4-diphosphocytidyl-2-C-methyl-D-erythritol 2-phosphate (CDP-ME2P) to 2-C-methyl-D-erythritol 2,4-cyclodiphosphate (ME-CPP) with a corresponding release of cytidine 5-monophosphate (CMP). This Saccharophagus degradans (strain 2-40 / ATCC 43961 / DSM 17024) protein is 2-C-methyl-D-erythritol 2,4-cyclodiphosphate synthase.